Here is an 83-residue protein sequence, read N- to C-terminus: uncharacterized protein (83 aa).

This is an uncharacterized protein from Escherichia coli (strain K12).